The primary structure comprises 409 residues: 8-amino-7-oxononanoate synthase (409 aa).

Arginine 20 is a substrate binding site. Residue 116 to 117 (GY) participates in pyridoxal 5'-phosphate binding. Histidine 141 is a binding site for substrate. Pyridoxal 5'-phosphate contacts are provided by serine 187, histidine 215, and threonine 243. N6-(pyridoxal phosphate)lysine is present on lysine 246. Threonine 369 contributes to the substrate binding site.

It belongs to the class-II pyridoxal-phosphate-dependent aminotransferase family. BioF subfamily. Homodimer. Pyridoxal 5'-phosphate serves as cofactor.

The enzyme catalyses 6-carboxyhexanoyl-[ACP] + L-alanine + H(+) = (8S)-8-amino-7-oxononanoate + holo-[ACP] + CO2. The protein operates within cofactor biosynthesis; biotin biosynthesis. In terms of biological role, catalyzes the decarboxylative condensation of pimeloyl-[acyl-carrier protein] and L-alanine to produce 8-amino-7-oxononanoate (AON), [acyl-carrier protein], and carbon dioxide. This Polaromonas naphthalenivorans (strain CJ2) protein is 8-amino-7-oxononanoate synthase.